Reading from the N-terminus, the 192-residue chain is Orotate phosphoribosyltransferase (192 aa).

E116–S124 is a binding site for 5-phospho-alpha-D-ribose 1-diphosphate. Positions 120 and 148 each coordinate orotate.

The protein belongs to the purine/pyrimidine phosphoribosyltransferase family. PyrE subfamily. In terms of assembly, homodimer. Mg(2+) is required as a cofactor.

The catalysed reaction is orotidine 5'-phosphate + diphosphate = orotate + 5-phospho-alpha-D-ribose 1-diphosphate. The protein operates within pyrimidine metabolism; UMP biosynthesis via de novo pathway; UMP from orotate: step 1/2. Catalyzes the transfer of a ribosyl phosphate group from 5-phosphoribose 1-diphosphate to orotate, leading to the formation of orotidine monophosphate (OMP). The protein is Orotate phosphoribosyltransferase of Clostridium perfringens (strain ATCC 13124 / DSM 756 / JCM 1290 / NCIMB 6125 / NCTC 8237 / Type A).